Reading from the N-terminus, the 388-residue chain is MSTTTQSDAGISREIVVIGSGFAAQQLVKSLRKLDAEQPIRLITADSGDEYNKPDLSHVVSRGCAAAAMTRQSGSDFAEQQRIALLPHCPVLGIDPVRRLVLTEQGEFPYGQLVLATGASAVRPELPGSEHLVTLNSQQEYAAVEGAIQQARRILVLGAGLIGCELAMDMASDGREVTLLDLADSPLSALLPATLTQPLQQALRSQGVSLQFGTGLARIDGQPGDGWRVTLTDGRTSEQDLVIAAIGLRPNLALARGAGLAVERGILVGDRLQTSDPHIFALGDCVQWQGQLLPFLQPIVLGANALARTLLGTPTPLALPPMLVKVKTPRYPLQLAGRTQGEDLAWQCRWNSHGMVAEARDQAGELCGFVVGGDQMSAAFPLLRQLPR.

Belongs to the FAD-dependent oxidoreductase family. It depends on FAD as a cofactor.

Its subcellular location is the cytoplasm. The catalysed reaction is 2 reduced [nitric oxide reductase rubredoxin domain] + NAD(+) + H(+) = 2 oxidized [nitric oxide reductase rubredoxin domain] + NADH. It participates in nitrogen metabolism; nitric oxide reduction. In terms of biological role, one of at least two accessory proteins for anaerobic nitric oxide (NO) reductase. Reduces the rubredoxin moiety of NO reductase. The sequence is that of Nitric oxide reductase FlRd-NAD(+) reductase from Aeromonas hydrophila subsp. hydrophila (strain ATCC 7966 / DSM 30187 / BCRC 13018 / CCUG 14551 / JCM 1027 / KCTC 2358 / NCIMB 9240 / NCTC 8049).